A 153-amino-acid chain; its full sequence is UPF0756 membrane protein LCABL_15860 (153 aa).

Helical transmembrane passes span 4–24 (WLFLLGILAIAIVGKNKSLII), 52–72 (WGVTVISAAIMVPIATGEIGF), 85–105 (WIAIGCGVLVAVLSAKGVGLL), and 115–135 (LVFGTIIGVVFLKGIAAGPVI).

The protein belongs to the UPF0756 family.

It localises to the cell membrane. The chain is UPF0756 membrane protein LCABL_15860 from Lacticaseibacillus casei (strain BL23) (Lactobacillus casei).